Reading from the N-terminus, the 600-residue chain is NADH-quinone oxidoreductase subunit C/D (600 aa).

The tract at residues 1–190 (MVNNMTDLTA…DPFELTKAKQ (190 aa)) is NADH dehydrogenase I subunit C. Positions 214-600 (DFMFLNLGPN…IDFVMSDVDR (387 aa)) are NADH dehydrogenase I subunit D.

In the N-terminal section; belongs to the complex I 30 kDa subunit family. This sequence in the C-terminal section; belongs to the complex I 49 kDa subunit family. In terms of assembly, NDH-1 is composed of 13 different subunits. Subunits NuoB, CD, E, F, and G constitute the peripheral sector of the complex.

Its subcellular location is the cell inner membrane. The enzyme catalyses a quinone + NADH + 5 H(+)(in) = a quinol + NAD(+) + 4 H(+)(out). Functionally, NDH-1 shuttles electrons from NADH, via FMN and iron-sulfur (Fe-S) centers, to quinones in the respiratory chain. The immediate electron acceptor for the enzyme in this species is believed to be ubiquinone. Couples the redox reaction to proton translocation (for every two electrons transferred, four hydrogen ions are translocated across the cytoplasmic membrane), and thus conserves the redox energy in a proton gradient. The chain is NADH-quinone oxidoreductase subunit C/D from Salmonella paratyphi A (strain ATCC 9150 / SARB42).